The primary structure comprises 369 residues: N-succinyl-L-Arg/Lys racemase (369 aa).

Substrate is bound by residues Y26, D51, 161–163 (KMK), and 191–193 (DVN). 3 residues coordinate Mg(2+): D191, E218, and D243. Substrate contacts are provided by residues K267, 295–296 (SM), and 320–322 (ELT).

It belongs to the mandelate racemase/muconate lactonizing enzyme family. Requires Mg(2+) as cofactor.

Its function is as follows. Catalyzes efficient racemization of N-succinyl-L-Arg and N-succinyl-L-Lys, suggesting that these are physiological substrates of this enzyme. Has low activity with L-Asp-L-Lys, and even lower activity with L-Leu-L-Arg, L-Leu-L-Lys, N-succinyl-L-His and N-succinyl-L-Met (in vitro). The sequence is that of N-succinyl-L-Arg/Lys racemase from Bacillus cereus (strain ATCC 14579 / DSM 31 / CCUG 7414 / JCM 2152 / NBRC 15305 / NCIMB 9373 / NCTC 2599 / NRRL B-3711).